The sequence spans 604 residues: Prostaglandin G/H synthase 2 (604 aa).

The N-terminal stretch at 1-17 (MLARALLLCAAVALSHA) is a signal peptide. The region spanning 18–55 (ANPCCSNPCQNRGVCMTMGFDQYKCDCTRTGFYGENCS) is the EGF-like domain. Cystine bridges form between cysteine 21-cysteine 32, cysteine 22-cysteine 145, cysteine 26-cysteine 42, and cysteine 44-cysteine 54. Asparagine 53 carries an N-linked (GlcNAc...) asparagine glycan. Residue arginine 106 coordinates substrate. Residue asparagine 130 is glycosylated (N-linked (GlcNAc...) asparagine). Catalysis depends on histidine 193, which acts as the Proton acceptor. Tyrosine 341 contacts substrate. Tyrosine 371 functions as the For cyclooxygenase activity in the catalytic mechanism. Histidine 374 is a heme b binding site. The N-linked (GlcNAc...) asparagine glycan is linked to asparagine 396. At cysteine 526 the chain carries S-nitrosocysteine. A disulfide bond links cysteine 555 and cysteine 561. Serine 565 is subject to O-acetylserine. Asparagine 580 carries N-linked (GlcNAc...) asparagine glycosylation.

Belongs to the prostaglandin G/H synthase family. As to quaternary structure, homodimer. Heme b is required as a cofactor. In terms of processing, S-nitrosylation by NOS2 (iNOS) activates enzyme activity. S-nitrosylation may take place on different Cys residues in addition to Cys-526. Acetylated at Ser-565 by SPHK1. During neuroinflammation, acetylation by SPHK1 promotes neuronal secretion of specialized preresolving mediators (SPMs), especially 15-R-lipoxin A4, which results in an increase of phagocytic microglia. As to expression, highest expression in kidney and urinary bladder.

It is found in the microsome membrane. The protein localises to the endoplasmic reticulum membrane. It localises to the nucleus inner membrane. The protein resides in the nucleus outer membrane. It catalyses the reaction (5Z,8Z,11Z,14Z)-eicosatetraenoate + AH2 + 2 O2 = prostaglandin H2 + A + H2O. It carries out the reaction (5Z,8Z,11Z,14Z)-eicosatetraenoate + 2 O2 = prostaglandin G2. The catalysed reaction is prostaglandin G2 + AH2 = prostaglandin H2 + A + H2O. The enzyme catalyses (5Z,8Z,11Z,14Z,17Z)-eicosapentaenoate + 2 O2 = prostaglandin G3. It catalyses the reaction prostaglandin G3 + AH2 = prostaglandin H3 + A + H2O. It carries out the reaction (8Z,11Z,14Z)-eicosatrienoate + 2 O2 = prostaglandin G1. The catalysed reaction is prostaglandin G1 + AH2 = prostaglandin H1 + A + H2O. The enzyme catalyses 2-(5Z,8Z,11Z,14Z)-eicosatetraenoyl-sn-glycero-3-phosphoethanolamine + 2 O2 = 2-(prostaglandin G2)-sn-glycero-3-phosphoethanolamine. It catalyses the reaction 2-(prostaglandin G2)-sn-glycero-3-phosphoethanolamine + AH2 = 2-(prostaglandin H2)-sn-glycero-3-phosphoethanolamine + A + H2O. It carries out the reaction 2-(5Z,8Z,11Z,14Z)-eicosatetraenoyl-sn-glycero-3-phosphocholine + 2 O2 = 2-(prostaglandin G2)-sn-glycero-3-phosphocholine. The catalysed reaction is 2-(prostaglandin G2)-sn-glycero-3-phosphocholine + AH2 = 2-(prostaglandin H2)-sn-glycero-3-phosphocholine + A + H2O. The enzyme catalyses (15S)-hydroperoxy-(5Z,8Z,11Z,13E)-eicosatetraenoate + AH2 = (15S)-hydroxy-(5Z,8Z,11Z,13E)-eicosatetraenoate + A + H2O. It catalyses the reaction 2-(5Z,8Z,11Z,14Z)-eicosatetraenoyl-sn-glycero-3-phosphocholine + AH2 + O2 = 2-[(15S)-hydroxy-(5Z,8Z,11Z,13E)-eicosatetraenoyl]-sn-glycero-3-phosphocholine + A + H2O. It carries out the reaction 2-(5Z,8Z,11Z,14Z)-eicosatetraenoyl-sn-glycero-3-phosphocholine + AH2 + O2 = 2-[(15R)-hydroxy-(5Z,8Z,11Z,13E)-eicosatetraenoyl]-sn-glycero-3-phosphocholine + A + H2O. The catalysed reaction is 2-(5Z,8Z,11Z,14Z)-eicosatetraenoyl-sn-glycero-3-phosphocholine + AH2 + O2 = 2-[(11R)-hydroxy-(5Z,8Z,12E,14Z)-eicosatetraenoyl]-sn-glycero-3-phosphocholine + A + H2O. The enzyme catalyses (9Z,12Z)-octadecadienoate + AH2 + O2 = 9-hydroxy-(10E,12Z)-octadecadienoate + A + H2O. It catalyses the reaction (9Z,12Z)-octadecadienoate + AH2 + O2 = 13-hydroxy-(9Z,11E)-octadecadienoate + A + H2O. It carries out the reaction (5Z,8Z,11Z,14Z)-eicosatetraenoate + AH2 + O2 = (15R)-hydroxy-(5Z,8Z,11Z,13E)-eicosatetraenoate + A + H2O. The catalysed reaction is (5Z,8Z,11Z,14Z)-eicosatetraenoate + AH2 + O2 = (11R)-hydroxy-(5Z,8Z,12E,14Z)-eicosatetraenoate + A + H2O. The enzyme catalyses (5Z,8Z,11Z,14Z,17Z)-eicosapentaenoate + AH2 + O2 = (11R)-hydroxy-(5Z,8Z,12E,14Z,17Z)-eicosapentaenoate + A + H2O. It catalyses the reaction (5Z,8Z,11Z,14Z,17Z)-eicosapentaenoate + AH2 + O2 = (18S)-hydroxy-(5Z,8Z,11Z,14Z,16E)-eicosapentaenoate + A + H2O. It carries out the reaction (5Z,8Z,11Z,14Z,17Z)-eicosapentaenoate + AH2 + O2 = (18R)-hydroxy-(5Z,8Z,11Z,14Z,16E)-eicosapentaenoate + A + H2O. The catalysed reaction is (5Z,8Z,11Z,14Z,17Z)-eicosapentaenoate + AH2 + O2 = (15R)-hydroxy-(5Z,8Z,11Z,13E,17Z)-eicosapentaenoate + A + H2O. The enzyme catalyses (5Z,8Z,11Z,14Z,17Z)-eicosapentaenoate + AH2 + O2 = (15S)-hydroxy-(5Z,8Z,11Z,13E,17Z)-eicosapentaenoate + A + H2O. It catalyses the reaction (7Z,10Z,13Z,16Z,19Z)-docosapentaenoate + AH2 + O2 = 13R-hydroxy-(7Z,10Z,14E,16Z,19Z)-docosapentaenoate + A + H2O. It carries out the reaction (4Z,7Z,10Z,13Z,16Z,19Z)-docosahexaenoate + AH2 + O2 = 13-hydroxy-(4Z,7Z,10Z,14E,16Z,19Z)-docosahexaenoate + A + H2O. The catalysed reaction is (5S)-hydroxy-(6E,8Z,11Z,14Z)-eicosatetraenoate + AH2 + O2 = (5S,15R)-dihydroxy-(6E,8Z,11Z,13E)-eicosatetraenoate + A + H2O. The enzyme catalyses (4Z,7Z,10Z,13Z,16Z,19Z)-docosahexaenoate + AH2 + O2 = 17R-hydroxy-(4Z,7Z,10Z,13Z,15E,19Z)-docosahexaenoate + A + H2O. It catalyses the reaction (5S)-hydroxy-(6E,8Z,11Z,14Z)-eicosatetraenoate + AH2 + O2 = (5S,15S)-dihydroxy-(6E,8Z,11Z,13E)-eicosatetraenoate + A + H2O. It carries out the reaction (5S)-hydroxy-(6E,8Z,11Z,14Z)-eicosatetraenoate + AH2 + O2 = (5S,11R)-dihydroxy-(6E,8Z,12E,14Z)-eicosatetraenoate + A + H2O. The catalysed reaction is 2-(5Z,8Z,11Z,14Z-eicosatetraenoyl)-glycerol + 2 O2 = 2-glyceryl-prostaglandin G2. The enzyme catalyses 2-glyceryl-prostaglandin G2 + AH2 = 2-glyceryl-prostaglandin H2 + A + H2O. It catalyses the reaction (5Z,8Z,11Z,14Z)-eicosatetraenoate + O2 = (15R)-hydroperoxy-(5Z,8Z,11Z,13E)-eicosatetraenoate. It carries out the reaction (5Z,8Z,11Z,14Z)-eicosatetraenoate + O2 = 11R-hydroperoxy-(5Z,8Z,12E,14Z)-eicosatetraenoate. The catalysed reaction is (9Z,12Z)-octadecadienoate + AH2 + O2 = (9R)-hydroxy-(10E,12Z)-octadecadienoate + A + H2O. The enzyme catalyses (9Z,12Z)-octadecadienoate + AH2 + O2 = (9S)-hydroxy-(10E,12Z)-octadecadienoate + A + H2O. It catalyses the reaction (9Z,12Z)-octadecadienoate + AH2 + O2 = (13S)-hydroxy-(9Z,11E)-octadecadienoate + A + H2O. It carries out the reaction (9Z,12Z)-octadecadienoate + AH2 + O2 = (13R)-hydroxy-(9Z,11E)-octadecadienoate + A + H2O. It functions in the pathway lipid metabolism; prostaglandin biosynthesis. Dual cyclooxygenase and peroxidase in the biosynthesis pathway of prostanoids, a class of C20 oxylipins mainly derived from arachidonate ((5Z,8Z,11Z,14Z)-eicosatetraenoate, AA, C20:4(n-6)), with a particular role in the inflammatory response. The cyclooxygenase activity oxygenates AA to the hydroperoxy endoperoxide prostaglandin G2 (PGG2), and the peroxidase activity reduces PGG2 to the hydroxy endoperoxide prostaglandin H2 (PGH2), the precursor of all 2-series prostaglandins and thromboxanes. This complex transformation is initiated by abstraction of hydrogen at carbon 13 (with S-stereochemistry), followed by insertion of molecular O2 to form the endoperoxide bridge between carbon 9 and 11 that defines prostaglandins. The insertion of a second molecule of O2 (bis-oxygenase activity) yields a hydroperoxy group in PGG2 that is then reduced to PGH2 by two electrons. Similarly catalyzes successive cyclooxygenation and peroxidation of dihomo-gamma-linoleate (DGLA, C20:3(n-6)) and eicosapentaenoate (EPA, C20:5(n-3)) to corresponding PGH1 and PGH3, the precursors of 1- and 3-series prostaglandins. In an alternative pathway of prostanoid biosynthesis, converts 2-arachidonoyl lysophopholipids to prostanoid lysophopholipids, which are then hydrolyzed by intracellular phospholipases to release free prostanoids. Metabolizes 2-arachidonoyl glycerol yielding the glyceryl ester of PGH2, a process that can contribute to pain response. Generates lipid mediators from n-3 and n-6 polyunsaturated fatty acids (PUFAs) via a lipoxygenase-type mechanism. Oxygenates PUFAs to hydroperoxy compounds and then reduces them to corresponding alcohols. Plays a role in the generation of resolution phase interaction products (resolvins) during both sterile and infectious inflammation. Metabolizes docosahexaenoate (DHA, C22:6(n-3)) to 17R-HDHA, a precursor of the D-series resolvins (RvDs). As a component of the biosynthetic pathway of E-series resolvins (RvEs), converts eicosapentaenoate (EPA, C20:5(n-3)) primarily to 18S-HEPE that is further metabolized by ALOX5 and LTA4H to generate 18S-RvE1 and 18S-RvE2. In vascular endothelial cells, converts docosapentaenoate (DPA, C22:5(n-3)) to 13R-HDPA, a precursor for 13-series resolvins (RvTs) shown to activate macrophage phagocytosis during bacterial infection. In activated leukocytes, contributes to oxygenation of hydroxyeicosatetraenoates (HETE) to diHETES (5,15-diHETE and 5,11-diHETE). Can also use linoleate (LA, (9Z,12Z)-octadecadienoate, C18:2(n-6)) as substrate and produce hydroxyoctadecadienoates (HODEs) in a regio- and stereospecific manner,being (9R)-HODE ((9R)-hydroxy-(10E,12Z)-octadecadienoate) and (13S)-HODE ((13S)-hydroxy-(9Z,11E)-octadecadienoate) its major products. During neuroinflammation, plays a role in neuronal secretion of specialized preresolving mediators (SPMs) 15R-lipoxin A4 that regulates phagocytic microglia. This chain is Prostaglandin G/H synthase 2 (PTGS2), found in Oryctolagus cuniculus (Rabbit).